The primary structure comprises 343 residues: MKKKWTLEETKMLFKKPFFNLMFQAQEEHRKNFDPNTIQISTLLSIKTGSCPEDCKYCPQSSRYKTGLKKEPLLEIEQILSAAKKAKDSGSSRFCMGAAWKNPKEKDMPYLEEIIKKIKEMGMETCMTLGTLNSTQAKKLADAGLDFYNHNLDTSKNFYNNIITTRTYQERLHTLHAVRSSGMKVCSGGIIGLGEKKQDRIELLMELSNLSIQPESVPINMLVKIPGTPMADNKDVEPFDFIRIIAVARIMMPKSYIRLSAGRHKMNDQTQAMCFMAGANSIFYGCKLLTSDNPEEKHDLELFKKLDLIPENKTQTLLKEDEYKTIIKSSKIKKDQYYNAAII.

Residues 36–254 (NTIQISTLLS…IAVARIMMPK (219 aa)) enclose the Radical SAM core domain. Cys-51, Cys-55, and Cys-58 together coordinate [4Fe-4S] cluster. The [2Fe-2S] cluster site is built by Cys-95, Cys-126, Cys-186, and Arg-258.

Belongs to the radical SAM superfamily. Biotin synthase family. Homodimer. Requires [4Fe-4S] cluster as cofactor. The cofactor is [2Fe-2S] cluster.

The enzyme catalyses (4R,5S)-dethiobiotin + (sulfur carrier)-SH + 2 reduced [2Fe-2S]-[ferredoxin] + 2 S-adenosyl-L-methionine = (sulfur carrier)-H + biotin + 2 5'-deoxyadenosine + 2 L-methionine + 2 oxidized [2Fe-2S]-[ferredoxin]. It participates in cofactor biosynthesis; biotin biosynthesis; biotin from 7,8-diaminononanoate: step 2/2. In terms of biological role, catalyzes the conversion of dethiobiotin (DTB) to biotin by the insertion of a sulfur atom into dethiobiotin via a radical-based mechanism. The sequence is that of Biotin synthase from Buchnera aphidicola subsp. Acyrthosiphon pisum (strain APS) (Acyrthosiphon pisum symbiotic bacterium).